Here is a 1097-residue protein sequence, read N- to C-terminus: RecBCD enzyme subunit RecC (1097 aa).

Belongs to the RecC family. As to quaternary structure, heterotrimer of RecB, RecC and RecD. All subunits contribute to DNA-binding.

In terms of biological role, a helicase/nuclease that prepares dsDNA breaks (DSB) for recombinational DNA repair. Binds to DSBs and unwinds DNA via a highly rapid and processive ATP-dependent bidirectional helicase activity. Holoenzyme degrades any linearized DNA that is unable to undergo homologous recombination. In the holoenzyme this subunit recognizes the wild-type Chi sequence, and when added to isolated RecB increases its ATP-dependent helicase processivity. Unlike the case in E.coli, suppresses RecA-dependent homologous recombination, is instead required for single-strand annealing pathway repair of DSB. In Mycobacterium tuberculosis (strain ATCC 25618 / H37Rv), this protein is RecBCD enzyme subunit RecC.